We begin with the raw amino-acid sequence, 394 residues long: Flavin-dependent monooxygenase, oxygenase subunit HsaA (394 aa).

Residues W84, 118 to 120 (SSY), 141 to 143 (WSS), R263, 346 to 347 (AT), and 368 to 369 (HA) each bind FMN.

Belongs to the HpaH/HsaA monooxygenase family. In terms of assembly, homotetramer under anaerobic conditions. HsaAB monooxygenase consists of an oxygenase component HsaA and a reductase component HsaB.

The enzyme catalyses 3-hydroxy-9,10-secoandrosta-1,3,5(10)-triene-9,17-dione + FMNH2 + O2 = 3,4-dihydroxy-9,10-secoandrosta-1,3,5(10)-triene-9,17-dione + FMN + H2O + H(+). It functions in the pathway lipid metabolism; steroid biosynthesis. Catalyzes the o-hydroxylation of 3-hydroxy-9,10-secoandrosta-1,3,5(10)-triene-9,17-dione (3-HSA) to 3,4-dihydroxy-9,10-secoandrosta-1,3,5(10)-triene-9,17-dione (3,4-DHSA) in the catabolism of cholesterol. In Mycobacterium tuberculosis (strain CDC 1551 / Oshkosh), this protein is Flavin-dependent monooxygenase, oxygenase subunit HsaA.